Consider the following 500-residue polypeptide: NAD(P)H-quinone oxidoreductase subunit 2 B, chloroplastic (500 aa).

Helical transmembrane passes span 14–34, 41–61, 78–98, 116–136, 166–186, 211–231, 242–262, 277–297, 305–325, 335–355, 376–396, 409–429, and 467–487; these read SILP…IDLT, WLYF…LFQL, FNGI…PLSM, LTAT…IIFI, LLMG…LYGL, ISIV…LVPF, APTS…LALA, WHLI…FIAI, MLAY…IAGD, YMLF…LFGL, ASFL…AGFF, GLYL…YYYL, and IIIC…VIAI.

The protein belongs to the complex I subunit 2 family. As to quaternary structure, NDH is composed of at least 16 different subunits, 5 of which are encoded in the nucleus.

The protein localises to the plastid. It is found in the chloroplast thylakoid membrane. It catalyses the reaction a plastoquinone + NADH + (n+1) H(+)(in) = a plastoquinol + NAD(+) + n H(+)(out). It carries out the reaction a plastoquinone + NADPH + (n+1) H(+)(in) = a plastoquinol + NADP(+) + n H(+)(out). Its function is as follows. NDH shuttles electrons from NAD(P)H:plastoquinone, via FMN and iron-sulfur (Fe-S) centers, to quinones in the photosynthetic chain and possibly in a chloroplast respiratory chain. The immediate electron acceptor for the enzyme in this species is believed to be plastoquinone. Couples the redox reaction to proton translocation, and thus conserves the redox energy in a proton gradient. This is NAD(P)H-quinone oxidoreductase subunit 2 B, chloroplastic from Anthoceros angustus (Hornwort).